Consider the following 199-residue polypeptide: Charged multivesicular body protein 1b (199 aa).

Coiled-coil stretches lie at residues 15 to 42 (AKEL…AIQK) and 178 to 199 (TSVA…RDQV). The segment at 167 to 199 (ELPQGQTGSVGTSVASTEQDELSQRLARLRDQV) is disordered. Residues 170–183 (QGQTGSVGTSVAST) show a composition bias toward polar residues. The MIT-interacting motif motif lies at 186–196 (DELSQRLARLR).

This sequence belongs to the SNF7 family.

It is found in the cytoplasm. The protein localises to the cytosol. The protein resides in the endosome. It localises to the late endosome membrane. Functionally, probable peripherally associated component of the endosomal sorting required for transport complex III (ESCRT-III) which is involved in multivesicular bodies (MVBs) formation and sorting of endosomal cargo proteins into MVBs. MVBs contain intraluminal vesicles (ILVs) that are generated by invagination and scission from the limiting membrane of the endosome and mostly are delivered to lysosomes enabling degradation of membrane proteins, such as stimulated growth factor receptors, lysosomal enzymes and lipids. The protein is Charged multivesicular body protein 1b (chmp1b) of Xenopus tropicalis (Western clawed frog).